Consider the following 312-residue polypeptide: Olfactory receptor 2L5 (312 aa).

At 1–24 the chain is on the extracellular side; sequence MENYNQTSTDFILLGLFPPSKIGL. N-linked (GlcNAc...) asparagine glycosylation occurs at Asn-5. Residues 25-48 traverse the membrane as a helical segment; sequence FLFILFVLIFLMALIGNLSMILLI. Over 49–56 the chain is Cytoplasmic; the sequence is FLDTHLHT. The chain crosses the membrane as a helical span at residues 57–78; sequence PMYFLLSQLSLIDLNYISTIVP. Over 79–99 the chain is Extracellular; it reads KMASDFLYGNKSISFIGCGIQ. The cysteines at positions 96 and 188 are disulfide-linked. A helical membrane pass occupies residues 100–119; that stretch reads SFFFMTFAGAEALLLTSMAY. Over 120 to 138 the chain is Cytoplasmic; sequence DRYVAICFPLHYPIRMSKR. The chain crosses the membrane as a helical span at residues 139–157; the sequence is MYVLMITGSWMIGSINSCA. The Extracellular segment spans residues 158–194; sequence HTVYAFRIPYCKSRAINHFFCDVPAMLTLACTDTWVY. Residues 195-218 traverse the membrane as a helical segment; that stretch reads EYTVFLSSTIFLVFPFTGIACSYG. Topologically, residues 219 to 235 are cytoplasmic; that stretch reads WVLLAVYRMHSAEGRKK. The chain crosses the membrane as a helical span at residues 236 to 258; sequence AYSTCSTHLTVVTFYYAPFAYTY. Topologically, residues 259 to 271 are extracellular; sequence LCPRSLRSLTEDK. Residues 272-291 traverse the membrane as a helical segment; that stretch reads VLAVFYTILTPMLNPIIYSL. The Cytoplasmic segment spans residues 292 to 312; sequence RNKEVMGALTRVIQNIFSVKM.

The protein belongs to the G-protein coupled receptor 1 family.

Its subcellular location is the cell membrane. In terms of biological role, odorant receptor. The sequence is that of Olfactory receptor 2L5 (OR2L5) from Homo sapiens (Human).